Reading from the N-terminus, the 256-residue chain is Fumarate reductase iron-sulfur subunit (256 aa).

One can recognise a 2Fe-2S ferredoxin-type domain in the interval 7–97 (MNVEVLRYNP…HMRIEPLANF (91 aa)). Tyrosine 14 contacts a menaquinone. Residues cysteine 58, cysteine 63, cysteine 66, and cysteine 78 each contribute to the [2Fe-2S] cluster site. The 4Fe-4S ferredoxin-type domain maps to 151 to 180 (LEKYRQFSMCINCGLCYAACPQFGLNPEFL). Residues cysteine 160, cysteine 163, and cysteine 166 each contribute to the [4Fe-4S] cluster site. Residues cysteine 170, cysteine 216, and cysteine 222 each coordinate [3Fe-4S] cluster. Residue cysteine 226 participates in [4Fe-4S] cluster binding. A menaquinone is bound at residue 237–240 (NQGK).

It belongs to the succinate dehydrogenase/fumarate reductase iron-sulfur protein family. Fumarate dehydrogenase forms part of an enzyme complex containing four subunits: a flavoprotein, an iron-sulfur, and two hydrophobic anchor proteins. It depends on [2Fe-2S] cluster as a cofactor. The cofactor is [3Fe-4S] cluster. [4Fe-4S] cluster is required as a cofactor.

It is found in the cell inner membrane. The enzyme catalyses a quinone + succinate = fumarate + a quinol. It carries out the reaction a menaquinone + succinate = a menaquinol + fumarate. The sequence is that of Fumarate reductase iron-sulfur subunit (frdB) from Haemophilus influenzae (strain ATCC 51907 / DSM 11121 / KW20 / Rd).